A 646-amino-acid polypeptide reads, in one-letter code: Autophagy-related protein 28 (646 aa).

2 disordered regions span residues 1–148 (MSSP…HVDN) and 221–245 (PTRS…RGLK). The segment covering 12-21 (SPRQRLSNPL) has biased composition (polar residues). The segment covering 63 to 75 (SATSTRRSSSPAS) has biased composition (low complexity). Residues 106–122 (MMMNQHPSRQSTVSSHG) are compositionally biased toward polar residues. 2 coiled-coil regions span residues 283–350 (LDKM…MEDV) and 485–514 (QQAA…ESKH). Disordered stretches follow at residues 475 to 494 (SQAG…SQLS) and 546 to 612 (AAAV…RGSA). Composition is skewed to basic and acidic residues over residues 557-575 (STDK…SHDE) and 588-597 (RMEDHDHDPP).

This sequence belongs to the ATG28 family.

It localises to the cytoplasm. The protein localises to the vacuole membrane. Its subcellular location is the cytoplasmic vesicle membrane. Functionally, required for the autophagic degradation of peroxisomes called pexophagy, but not essential for general autophagy. Involved in resistance to elevated pH. This is Autophagy-related protein 28 from Gibberella zeae (strain ATCC MYA-4620 / CBS 123657 / FGSC 9075 / NRRL 31084 / PH-1) (Wheat head blight fungus).